The primary structure comprises 408 residues: LL-diaminopimelate aminotransferase (408 aa).

Residues Tyr15 and Gly42 each contribute to the substrate site. Residues Tyr72, 108 to 109, Tyr132, Asn187, Tyr218, and 246 to 248 contribute to the pyridoxal 5'-phosphate site; these read SK and SFS. 3 residues coordinate substrate: Lys109, Tyr132, and Asn187. Residue Lys249 is modified to N6-(pyridoxal phosphate)lysine. Residues Arg257 and Asn292 each coordinate pyridoxal 5'-phosphate. Substrate contacts are provided by Asn292 and Arg388.

This sequence belongs to the class-I pyridoxal-phosphate-dependent aminotransferase family. LL-diaminopimelate aminotransferase subfamily. Homodimer. Pyridoxal 5'-phosphate is required as a cofactor.

It catalyses the reaction (2S,6S)-2,6-diaminopimelate + 2-oxoglutarate = (S)-2,3,4,5-tetrahydrodipicolinate + L-glutamate + H2O + H(+). Its pathway is amino-acid biosynthesis; L-lysine biosynthesis via DAP pathway; LL-2,6-diaminopimelate from (S)-tetrahydrodipicolinate (aminotransferase route): step 1/1. Involved in the synthesis of meso-diaminopimelate (m-DAP or DL-DAP), required for both lysine and peptidoglycan biosynthesis. Catalyzes the direct conversion of tetrahydrodipicolinate to LL-diaminopimelate. This is LL-diaminopimelate aminotransferase from Prochlorococcus marinus subsp. pastoris (strain CCMP1986 / NIES-2087 / MED4).